A 347-amino-acid polypeptide reads, in one-letter code: NADH-ubiquinone oxidoreductase chain 2 (347 aa).

The next 10 membrane-spanning stretches (helical) occupy residues 1–21 (MNPLTLSLVLTTMMAGTLIVM), 25–45 (HWFMIWVGFEMNMLAIIPLLT), 67–87 (SMLLMMAAITNLLYTGHWSIM), 111–131 (FHFWVPEVTQGIPLMSGLILL), 144–164 (MIMPLINTDILLIMSLMSIAI), 178–198 (IMAYSSIAHMGWMMAVLAYNP), 201–221 (TLLNLYIYIPMTITTFMLLMI), 237–257 (LPLITTLILITMLSLGGLPPL), 274–294 (SSIIMPTLMTLLALLNLYFYT), and 326–346 (LPLMIMISTLVPPLAPMMPIL).

This sequence belongs to the complex I subunit 2 family. In terms of assembly, core subunit of respiratory chain NADH dehydrogenase (Complex I) which is composed of 45 different subunits. Interacts with TMEM242.

It localises to the mitochondrion inner membrane. The catalysed reaction is a ubiquinone + NADH + 5 H(+)(in) = a ubiquinol + NAD(+) + 4 H(+)(out). Functionally, core subunit of the mitochondrial membrane respiratory chain NADH dehydrogenase (Complex I) which catalyzes electron transfer from NADH through the respiratory chain, using ubiquinone as an electron acceptor. Essential for the catalytic activity and assembly of complex I. The polypeptide is NADH-ubiquinone oxidoreductase chain 2 (Myotis simus (Velvety myotis)).